Here is a 314-residue protein sequence, read N- to C-terminus: Ribosomal protein uL3 glutamine methyltransferase (314 aa).

It belongs to the protein N5-glutamine methyltransferase family. PrmB subfamily.

The catalysed reaction is L-glutaminyl-[ribosomal protein uL3] + S-adenosyl-L-methionine = N(5)-methyl-L-glutaminyl-[ribosomal protein uL3] + S-adenosyl-L-homocysteine + H(+). Its function is as follows. Methylates large ribosomal subunit protein uL3 on a specific glutamine residue. The polypeptide is Ribosomal protein uL3 glutamine methyltransferase (Vibrio cholerae serotype O1 (strain ATCC 39315 / El Tor Inaba N16961)).